The chain runs to 280 residues: Foldase protein PrsA 4 (280 aa).

Positions methionine 1–alanine 21 are cleaved as a signal peptide. Cysteine 22 carries N-palmitoyl cysteine lipidation. The S-diacylglycerol cysteine moiety is linked to residue cysteine 22. One can recognise a PpiC domain in the interval lysine 132–aspartate 222.

It belongs to the PrsA family.

It is found in the cell membrane. The catalysed reaction is [protein]-peptidylproline (omega=180) = [protein]-peptidylproline (omega=0). Plays a major role in protein secretion by helping the post-translocational extracellular folding of several secreted proteins. The polypeptide is Foldase protein PrsA 4 (prsA4) (Bacillus cereus (strain ATCC 14579 / DSM 31 / CCUG 7414 / JCM 2152 / NBRC 15305 / NCIMB 9373 / NCTC 2599 / NRRL B-3711)).